A 339-amino-acid polypeptide reads, in one-letter code: tRNA-specific 2-thiouridylase MnmA (339 aa).

ATP-binding positions include 8–15 and methionine 34; that span reads AMSGGVDS. Cysteine 94 acts as the Nucleophile in catalysis. An intrachain disulfide couples cysteine 94 to cysteine 188. Position 118 (glycine 118) interacts with ATP. An interaction with tRNA region spans residues 136–138; it reads KDQ. Cysteine 188 serves as the catalytic Cysteine persulfide intermediate. Positions 290 to 291 are interaction with tRNA; the sequence is RY.

This sequence belongs to the MnmA/TRMU family.

It is found in the cytoplasm. It catalyses the reaction S-sulfanyl-L-cysteinyl-[protein] + uridine(34) in tRNA + AH2 + ATP = 2-thiouridine(34) in tRNA + L-cysteinyl-[protein] + A + AMP + diphosphate + H(+). Functionally, catalyzes the 2-thiolation of uridine at the wobble position (U34) of tRNA, leading to the formation of s(2)U34. This chain is tRNA-specific 2-thiouridylase MnmA, found in Nitratiruptor sp. (strain SB155-2).